Here is a 138-residue protein sequence, read N- to C-terminus: Protein Rrf1 (138 aa).

The region spanning 4 to 116 (RILVVQEDPD…LLLALVDRAL (113 aa)) is the Response regulatory domain. Asp13 and Asp53 each carry 4-aspartylphosphate.

May be involved in regulation of gene transcription. Belongs to the family of response regulators, and members of this family involved in the regulation of gene transcription are two-domain proteins. This protein contains only the N-terminal phosphorylation domain and not the C-terminal DNA-binding domain but it may bind to Rrf2 protein and the latter may bind to DNA. The sequence is that of Protein Rrf1 (rrf1) from Nitratidesulfovibrio vulgaris (strain ATCC 29579 / DSM 644 / CCUG 34227 / NCIMB 8303 / VKM B-1760 / Hildenborough) (Desulfovibrio vulgaris).